The following is a 305-amino-acid chain: Tetraspanin-12 (305 aa).

The Cytoplasmic portion of the chain corresponds to 1-12; sequence MAREDSVKCLRC. Residues cysteine 9 and cysteine 12 are each lipidated (S-palmitoyl cysteine). Residues 13–33 traverse the membrane as a helical segment; sequence LLYALNLLFWLMSISVLAVSA. The Extracellular segment spans residues 34–59; the sequence is WMRDYLNNVLTLTAETRVEEAVILTY. The helical transmembrane segment at 60-80 threads the bilayer; the sequence is FPVVHPVMIAVCCFLIIVGML. The Cytoplasmic portion of the chain corresponds to 81–89; the sequence is GYCGTVKRN. Cysteine 83 is lipidated: S-palmitoyl cysteine. A helical transmembrane segment spans residues 90 to 110; that stretch reads LLLLAWYFGSLLVIFCVELAC. The Extracellular segment spans residues 111 to 224; that stretch reads GVWTYEQEIM…RGTKQLQVLR (114 aa). A helical transmembrane segment spans residues 225-245; sequence FLGISIGVTQILAMILTITLL. Over 246–305 the chain is Cytoplasmic; sequence WALYYDRREPGTDQMMALKNDTTQHLPCHSVELLKPSLSRIFEHTSMANSFNTHFEMEEL.

The protein belongs to the tetraspanin (TM4SF) family. In terms of assembly, component of a complex, at least composed of TSPAN12, FZD4 and norrin (NDP). Interacts (when palmitoylated) with ADAM10. Interacts with MMP14/MT1-MMP. In terms of processing, palmitoylated; required for interaction with ADAM10. The precise position of palmitoylated residues is unclear and occurs either on Cys-9, Cys-12 and/or Cys-83.

Its subcellular location is the cell membrane. Regulator of cell surface receptor signal transduction. Plays a central role in retinal vascularization by regulating norrin (NDP) signal transduction. Acts in concert with norrin (NDP) to promote FZD4 multimerization and subsequent activation of FZD4, leading to promote accumulation of beta-catenin (CTNNB1) and stimulate LEF/TCF-mediated transcriptional programs. Suprisingly, it only activates the norrin (NDP)-dependent activation of FZD4, while it does not activate the Wnt-dependent activation of FZD4, suggesting the existence of a Wnt-independent signaling that also promote accumulation the beta-catenin (CTNNB1). Acts as a regulator of membrane proteinases such as ADAM10 and MMP14/MT1-MMP. Activates ADAM10-dependent cleavage activity of amyloid precursor protein (APP). Activates MMP14/MT1-MMP-dependent cleavage activity. This chain is Tetraspanin-12 (TSPAN12), found in Bos taurus (Bovine).